Consider the following 354-residue polypeptide: Inactive ADP-ribosyltransferase ARH2 (354 aa).

S27 carries the post-translational modification Phosphoserine.

This sequence belongs to the ADP-ribosylglycohydrolase family.

The protein localises to the cytoplasm. It localises to the myofibril. The protein resides in the sarcomere. Required for myofibril assembly and outgrowth of the cardiac chambers in the developing heart. Appears to be catalytically inactive, showing no activity against O-acetyl-ADP-ribose. The protein is Inactive ADP-ribosyltransferase ARH2 (ADPRHL1) of Homo sapiens (Human).